The sequence spans 437 residues: Chromosomal replication initiator protein DnaA (437 aa).

The tract at residues 1–67 is domain I, interacts with DnaA modulators; it reads MKNKIIASLK…KVVKDILGKD (67 aa). The interval 67–97 is domain II; the sequence is DATYEITFKEIPYETKVESGPLIKKRPLLIT. The tract at residues 98-313 is domain III, AAA+ region; sequence PLNPKYTFEN…GAILRLIAYR (216 aa). The ATP site is built by glycine 141, glycine 143, lysine 144, and threonine 145. The segment at 314 to 437 is domain IV, binds dsDNA; sequence NLYGTLNLSI…SKGFAQGESM (124 aa).

The protein belongs to the DnaA family. As to quaternary structure, oligomerizes as a right-handed, spiral filament on DNA at oriC.

The protein resides in the cytoplasm. In terms of biological role, plays an essential role in the initiation and regulation of chromosomal replication. ATP-DnaA binds to the origin of replication (oriC) to initiate formation of the DNA replication initiation complex once per cell cycle. Binds the DnaA box (a 9 base pair repeat at the origin) and separates the double-stranded (ds)DNA. Forms a right-handed helical filament on oriC DNA; dsDNA binds to the exterior of the filament while single-stranded (ss)DNA is stabiized in the filament's interior. The ATP-DnaA-oriC complex binds and stabilizes one strand of the AT-rich DNA unwinding element (DUE), permitting loading of DNA polymerase. After initiation quickly degrades to an ADP-DnaA complex that is not apt for DNA replication. Binds acidic phospholipids. The protein is Chromosomal replication initiator protein DnaA of Thermosipho melanesiensis (strain DSM 12029 / CIP 104789 / BI429).